The sequence spans 67 residues: Stomoxyn (67 aa).

The signal sequence occupies residues 1 to 24 (MNFYKYLVVLVVLVLCLSATQTEA). Threonine 66 is modified (threonine amide).

Constitutively expressed in the adult anterior midgut; proventriculus, thoracic and reservoir regions.

The protein localises to the secreted. Its function is as follows. Has antimicrobial activity against most Gram-positive and Gram-negative bacteria, filamentous fungi and yeasts tested. Has trypanolytic effect on T.b.rhodesiense and limited hemolytic activity against bovine red blood cells. In terms of biological role, may play an important role in protecting the stored blood in the anterior midgut from microorganisms prior to digestion. Adopts an amphipathic alpha-helical structure only in the presence of an organic solvent that mimics a phospholipid membrane. The chain is Stomoxyn from Stomoxys calcitrans (Stable fly).